We begin with the raw amino-acid sequence, 183 residues long: Photosystem I assembly protein Ycf4 (183 aa).

2 helical membrane passes run 21-43 (YWWA…SSRL) and 58-80 (FIPQ…TYLW).

It belongs to the Ycf4 family.

The protein resides in the plastid. It is found in the chloroplast thylakoid membrane. In terms of biological role, seems to be required for the assembly of the photosystem I complex. This is Photosystem I assembly protein Ycf4 from Nephroselmis olivacea (Green alga).